A 115-amino-acid polypeptide reads, in one-letter code: Putative HNH nuclease YajD (115 aa).

The 49-residue stretch at 27–75 (CGRCSREFVYSNLRELTVHHIDHDHTNNPEDGSNWELLCLYCHDHEHSK) folds into the HNH domain.

The protein belongs to the HNH nuclease family.

The polypeptide is Putative HNH nuclease YajD (yajD) (Salmonella typhi).